A 123-amino-acid chain; its full sequence is NADH-quinone oxidoreductase subunit A (123 aa).

The next 3 helical transmembrane spans lie at 11 to 31 (YLPI…IMIL), 68 to 88 (LVAI…PWAI), and 93 to 113 (IGKI…IGFI).

This sequence belongs to the complex I subunit 3 family. As to quaternary structure, NDH-1 is composed of 14 different subunits. Subunits NuoA, H, J, K, L, M, N constitute the membrane sector of the complex.

Its subcellular location is the cell inner membrane. The catalysed reaction is a quinone + NADH + 5 H(+)(in) = a quinol + NAD(+) + 4 H(+)(out). NDH-1 shuttles electrons from NADH, via FMN and iron-sulfur (Fe-S) centers, to quinones in the respiratory chain. The immediate electron acceptor for the enzyme in this species is believed to be ubiquinone. Couples the redox reaction to proton translocation (for every two electrons transferred, four hydrogen ions are translocated across the cytoplasmic membrane), and thus conserves the redox energy in a proton gradient. The chain is NADH-quinone oxidoreductase subunit A from Rickettsia felis (strain ATCC VR-1525 / URRWXCal2) (Rickettsia azadi).